The following is a 246-amino-acid chain: Dihydroorotate dehydrogenase B (NAD(+)), electron transfer subunit (246 aa).

An FAD-binding FR-type domain is found at 3-95 (MEYFKGKVKE…IGPLGNGFDI (93 aa)). FAD-binding positions include 48–51 (RPIS) and 70–71 (GT). Positions 213, 218, 221, and 233 each coordinate [2Fe-2S] cluster.

It belongs to the PyrK family. Heterotetramer of 2 PyrK and 2 PyrD type B subunits. [2Fe-2S] cluster is required as a cofactor. Requires FAD as cofactor.

It functions in the pathway pyrimidine metabolism; UMP biosynthesis via de novo pathway; orotate from (S)-dihydroorotate (NAD(+) route): step 1/1. Functionally, responsible for channeling the electrons from the oxidation of dihydroorotate from the FMN redox center in the PyrD type B subunit to the ultimate electron acceptor NAD(+). The polypeptide is Dihydroorotate dehydrogenase B (NAD(+)), electron transfer subunit (Clostridium perfringens (strain 13 / Type A)).